A 911-amino-acid polypeptide reads, in one-letter code: Protein translocase subunit SecA (911 aa).

ATP contacts are provided by residues glutamine 86, 104 to 108 (GEGKT), and aspartate 512. Residues cysteine 895, cysteine 897, cysteine 906, and histidine 907 each coordinate Zn(2+).

It belongs to the SecA family. In terms of assembly, monomer and homodimer. Part of the essential Sec protein translocation apparatus which comprises SecA, SecYEG and auxiliary proteins SecDF-YajC and YidC. Requires Zn(2+) as cofactor.

It is found in the cell inner membrane. Its subcellular location is the cytoplasm. It catalyses the reaction ATP + H2O + cellular proteinSide 1 = ADP + phosphate + cellular proteinSide 2.. Its function is as follows. Part of the Sec protein translocase complex. Interacts with the SecYEG preprotein conducting channel. Has a central role in coupling the hydrolysis of ATP to the transfer of proteins into and across the cell membrane, serving both as a receptor for the preprotein-SecB complex and as an ATP-driven molecular motor driving the stepwise translocation of polypeptide chains across the membrane. This chain is Protein translocase subunit SecA, found in Bordetella bronchiseptica (strain ATCC BAA-588 / NCTC 13252 / RB50) (Alcaligenes bronchisepticus).